The primary structure comprises 588 residues: Autophagy-related protein 22-1 (588 aa).

The helical transmembrane segment at 35–55 (YGWAAEVFTVCAMGSFLPITL) threads the bilayer. A glycan (N-linked (GlcNAc...) asparagine) is linked at Asn-84. 3 helical membrane-spanning segments follow: residues 109-129 (TASF…ILII), 144-164 (LLVS…AVTP), and 168-188 (LLGG…FVLL). The N-linked (GlcNAc...) asparagine glycan is linked to Asn-255. The next 8 helical transmembrane spans lie at 270–290 (GIGI…LVIV), 301–321 (LVLF…AFWL), 365–385 (ILLF…VSGT), 399–419 (AALG…AFSW), 434–454 (IIAC…GFIP), 471–493 (FPLG…SFFG), 507–527 (LYAI…GFIT), and 536–556 (AFFF…LVDA).

This sequence belongs to the ATG22 family.

The protein resides in the vacuole membrane. In terms of biological role, vacuolar effluxer which mediate the efflux of amino acids resulting from autophagic degradation. The release of autophagic amino acids allows the maintenance of protein synthesis and viability during nitrogen starvation. The polypeptide is Autophagy-related protein 22-1 (atg22-1) (Emericella nidulans (strain FGSC A4 / ATCC 38163 / CBS 112.46 / NRRL 194 / M139) (Aspergillus nidulans)).